The primary structure comprises 776 residues: Endonuclease MutS2 (776 aa).

330–337 (GPNTGGKT) contacts ATP. The Smr domain maps to 701 to 776 (LDLRGMRYEE…GSGATIAILK (76 aa)).

The protein belongs to the DNA mismatch repair MutS family. MutS2 subfamily. As to quaternary structure, homodimer. Binds to stalled ribosomes, contacting rRNA.

Functionally, endonuclease that is involved in the suppression of homologous recombination and thus may have a key role in the control of bacterial genetic diversity. In terms of biological role, acts as a ribosome collision sensor, splitting the ribosome into its 2 subunits. Detects stalled/collided 70S ribosomes which it binds and splits by an ATP-hydrolysis driven conformational change. Acts upstream of the ribosome quality control system (RQC), a ribosome-associated complex that mediates the extraction of incompletely synthesized nascent chains from stalled ribosomes and their subsequent degradation. Probably generates substrates for RQC. The sequence is that of Endonuclease MutS2 from Lactococcus lactis subsp. cremoris (strain MG1363).